The sequence spans 323 residues: Cytochrome c biogenesis protein CcsA (323 aa).

8 helical membrane-spanning segments follow: residues 18–38 (VSVV…VGLY), 43–63 (KGML…WVYW), 71–91 (LYES…IPSF), 99–119 (LNVI…SGLL), 146–166 (LGYA…IIIF), 227–247 (VISL…VWAN), 256–276 (WDPK…YLHI), and 288–308 (AIVA…VNLL).

The protein belongs to the CcmF/CycK/Ccl1/NrfE/CcsA family. As to quaternary structure, may interact with Ccs1.

The protein localises to the plastid. It is found in the chloroplast thylakoid membrane. In terms of biological role, required during biogenesis of c-type cytochromes (cytochrome c6 and cytochrome f) at the step of heme attachment. The sequence is that of Cytochrome c biogenesis protein CcsA from Spinacia oleracea (Spinach).